Consider the following 203-residue polypeptide: dCTP deaminase (203 aa).

Residues 105-110, D123, 131-133, Q152, Y166, K173, and Q177 contribute to the dCTP site; these read RSSLGR and TLE. The active-site Proton donor/acceptor is E133. Residues 164–203 form a disordered region; the sequence is RPYGVERGSKYQDQDGPQASRIGSDPEFHSDENQAAEHES. Positions 166–176 are enriched in basic and acidic residues; that stretch reads YGVERGSKYQD. Positions 187–203 are enriched in basic and acidic residues; that stretch reads SDPEFHSDENQAAEHES.

Belongs to the dCTP deaminase family. As to quaternary structure, homotrimer.

The catalysed reaction is dCTP + H2O + H(+) = dUTP + NH4(+). It functions in the pathway pyrimidine metabolism; dUMP biosynthesis; dUMP from dCTP (dUTP route): step 1/2. Functionally, catalyzes the deamination of dCTP to dUTP. In Halorubrum lacusprofundi (strain ATCC 49239 / DSM 5036 / JCM 8891 / ACAM 34), this protein is dCTP deaminase.